The sequence spans 245 residues: Probable transcriptional regulatory protein NSE_0641 (245 aa).

The tract at residues 1 to 22 is disordered; that stretch reads MAGHSQYANIKHRKNAQDAKRA.

This sequence belongs to the TACO1 family.

The protein resides in the cytoplasm. The protein is Probable transcriptional regulatory protein NSE_0641 of Neorickettsia sennetsu (strain ATCC VR-367 / Miyayama) (Ehrlichia sennetsu).